Consider the following 358-residue polypeptide: Peptide chain release factor 1 (358 aa).

Glutamine 235 carries the post-translational modification N5-methylglutamine.

It belongs to the prokaryotic/mitochondrial release factor family. Post-translationally, methylated by PrmC. Methylation increases the termination efficiency of RF1.

It localises to the cytoplasm. Peptide chain release factor 1 directs the termination of translation in response to the peptide chain termination codons UAG and UAA. The sequence is that of Peptide chain release factor 1 from Brachyspira hyodysenteriae (strain ATCC 49526 / WA1).